The chain runs to 208 residues: Transmembrane protein 222 (208 aa).

Residues Met1–Met34 are disordered. Residues Met1 to Cys55 are Extracellular-facing. Residues Val56–Ile76 form a helical membrane-spanning segment. At Cys77–Asn164 the chain is on the cytoplasmic side. The helical transmembrane segment at Met165 to Val185 threads the bilayer. Position 186 (Lys186) is a topological domain, extracellular. Residues Thr187 to Leu207 form a helical membrane-spanning segment. A topological domain (cytoplasmic) is located at residue Arg208.

The protein resides in the membrane. Its subcellular location is the cell projection. The protein localises to the dendrite. This chain is Transmembrane protein 222 (Tmem222), found in Mus musculus (Mouse).